Reading from the N-terminus, the 142-residue chain is 3-hydroxyacyl-[acyl-carrier-protein] dehydratase FabZ (142 aa).

His48 is a catalytic residue.

The protein belongs to the thioester dehydratase family. FabZ subfamily.

The protein resides in the cytoplasm. The enzyme catalyses a (3R)-hydroxyacyl-[ACP] = a (2E)-enoyl-[ACP] + H2O. Involved in unsaturated fatty acids biosynthesis. Catalyzes the dehydration of short chain beta-hydroxyacyl-ACPs and long chain saturated and unsaturated beta-hydroxyacyl-ACPs. The polypeptide is 3-hydroxyacyl-[acyl-carrier-protein] dehydratase FabZ (Ruminiclostridium cellulolyticum (strain ATCC 35319 / DSM 5812 / JCM 6584 / H10) (Clostridium cellulolyticum)).